Reading from the N-terminus, the 354-residue chain is Uroporphyrinogen decarboxylase (354 aa).

Residues 27 to 31 (RQAGR), aspartate 77, tyrosine 154, threonine 209, and histidine 327 each bind substrate.

It belongs to the uroporphyrinogen decarboxylase family. Homodimer.

Its subcellular location is the cytoplasm. The catalysed reaction is uroporphyrinogen III + 4 H(+) = coproporphyrinogen III + 4 CO2. Its pathway is porphyrin-containing compound metabolism; protoporphyrin-IX biosynthesis; coproporphyrinogen-III from 5-aminolevulinate: step 4/4. Its function is as follows. Catalyzes the decarboxylation of four acetate groups of uroporphyrinogen-III to yield coproporphyrinogen-III. This is Uroporphyrinogen decarboxylase from Shigella flexneri serotype 5b (strain 8401).